The chain runs to 277 residues: Protein OPG166 (277 aa).

N-linked (GlcNAc...) asparagine; by host glycosylation is found at Asn29 and Asn58. 5 helical membrane passes run 124 to 144 (TMLM…EITY), 156 to 176 (GILQ…AFLF), 186 to 206 (IIGL…KVFS), 219 to 239 (LIIY…GLSL), and 247 to 267 (LLLS…LFLV).

It belongs to the orthopoxvirus OPG166 protein family.

It localises to the host membrane. In terms of biological role, promotes, when overexpressed, the influx of extracellular Ca(2+), leading to membrane permeability and host cell necrosis. The protein is Protein OPG166 (OPG166) of Bos taurus (Bovine).